The chain runs to 434 residues: Trigger factor (434 aa).

The region spanning 160–245 is the PPIase FKBP-type domain; it reads GDKVKMNFVG…LTEVQAAQLP (86 aa).

Belongs to the FKBP-type PPIase family. Tig subfamily.

The protein localises to the cytoplasm. The catalysed reaction is [protein]-peptidylproline (omega=180) = [protein]-peptidylproline (omega=0). Involved in protein export. Acts as a chaperone by maintaining the newly synthesized protein in an open conformation. Functions as a peptidyl-prolyl cis-trans isomerase. This chain is Trigger factor, found in Shewanella denitrificans (strain OS217 / ATCC BAA-1090 / DSM 15013).